We begin with the raw amino-acid sequence, 1506 residues long: Gag-Pol polyprotein (1506 aa).

2 CCHC-type zinc fingers span residues 385–402 (QKCY…QCRQ) and 404–421 (IICH…DCRQ). In terms of domain architecture, Peptidase A2 spans 459–530 (KKLLVDTGAD…SPVEVLGRDN (72 aa)). The active-site Protease; shared with dimeric partner is the aspartate 464. A Reverse transcriptase domain is found at 587-776 (EGKVGRAPPH…YPAKWLGFEL (190 aa)). Residues aspartate 652, aspartate 727, aspartate 728, aspartate 980, glutamate 1012, aspartate 1032, and aspartate 1085 each coordinate Mg(2+). The RNase H type-1 domain occupies 971 to 1093 (LVPGPTYYTD…IDRYISEIFL (123 aa)). The segment at 1228–1269 (ENIPLAEEEHNKWHQDAVSLHLEFGIPRTAAEDIVQQCDVCQ) adopts an Integrase-type zinc-finger fold. Zn(2+)-binding residues include histidine 1237, histidine 1241, cysteine 1265, and cysteine 1268. An Integrase catalytic domain is found at 1270–1430 (ENKMPSTLRG…SPMDIFIFNK (161 aa)). Aspartate 1291, aspartate 1343, and glutamate 1379 together coordinate Mg(2+). The segment at residues 1447–1499 (RFCYYRTRKRGHPGEWQGPTQVLWGGDGAIVVKDRGTDRYLVIANKDVKFIPP) is a DNA-binding region (integrase-type).

It belongs to the retroviral Pol polyprotein family. As to quaternary structure, homotetramer; further associates as a homohexadecamer. It depends on Mg(2+) as a cofactor. Specific enzymatic cleavages by the viral protease yield mature proteins.

The protein resides in the virion. It catalyses the reaction Endonucleolytic cleavage to 5'-phosphomonoester.. The catalysed reaction is 3'-end directed exonucleolytic cleavage of viral RNA-DNA hybrid.. It carries out the reaction dUTP + H2O = dUMP + diphosphate + H(+). The enzyme catalyses DNA(n) + a 2'-deoxyribonucleoside 5'-triphosphate = DNA(n+1) + diphosphate. Its function is as follows. Mediates, with Gag polyprotein, the essential events in virion assembly, including binding the plasma membrane, making the protein-protein interactions necessary to create spherical particles, recruiting the viral Env proteins, and packaging the genomic RNA via direct interactions with the RNA packaging sequence. Functionally, targets the polyprotein to the plasma membrane. In terms of biological role, forms the core that encapsulates the genomic RNA-nucleocapsid complex in the virion. Encapsulates and protects viral dimeric unspliced genomic RNA (gRNA). Binds these RNAs through its zinc fingers. Acts as a nucleic acid chaperone which is involved in rearrangement of nucleic acid secondary structure during gRNA retrotranscription. Also facilitates template switch leading to recombination. Its function is as follows. The aspartyl protease mediates proteolytic cleavages of Gag and Gag-Pol polyproteins during or shortly after the release of the virion from the plasma membrane. Cleavages take place as an ordered, step-wise cascade to yield mature proteins. This process is called maturation. Displays maximal activity during the budding process just prior to particle release from the cell. Functionally, RT is a multifunctional enzyme that converts the viral dimeric RNA genome into dsDNA in the cytoplasm, shortly after virus entry into the cell. This enzyme displays a DNA polymerase activity that can copy either DNA or RNA templates, and a ribonuclease H (RNase H) activity that cleaves the RNA strand of RNA-DNA heteroduplexes in a partially processive 3' to 5' endonucleasic mode. Conversion of viral genomic RNA into dsDNA requires many steps. A tRNA-Trp binds to the primer-binding site (PBS) situated at the 5' end of the viral RNA. RT uses the 3' end of the tRNA primer to perfom a short round of RNA-dependent minus-strand DNA synthesis. The reading proceeds through the U5 region and ends after the repeated (R) region which is present at both ends of viral RNA. The portion of the RNA-DNA heteroduplex is digested by the RNase H, resulting in a ssDNA product attached to the tRNA primer. This ssDNA/tRNA hybridizes with the identical R region situated at the 3' end of viral RNA. This template exchange, known as minus-strand DNA strong stop transfer, can be either intra- or intermolecular. RT uses the 3' end of this newly synthesized short ssDNA to perfom the RNA-dependent minus-strand DNA synthesis of the whole template. RNase H digests the RNA template except for a polypurine tract (PPT) situated at the 5' end of the genome. It is not clear if both polymerase and RNase H activities are simultaneous. RNase H probably can proceed both in a polymerase-dependent (RNA cut into small fragments by the same RT performing DNA synthesis) and a polymerase-independent mode (cleavage of remaining RNA fragments by free RTs). Secondly, RT performs DNA-directed plus-strand DNA synthesis using the PPT that has not been removed by RNase H as primers. PPT and tRNA primers are then removed by RNase H. The 3' and 5' ssDNA PBS regions hybridize to form a circular dsDNA intermediate. Strand displacement synthesis by RT to the PBS and PPT ends produces a blunt ended, linear dsDNA copy of the viral genome that includes long terminal repeats (LTRs) at both ends. In terms of biological role, catalyzes viral DNA integration into the host chromosome, by performing a series of DNA cutting and joining reactions. The sequence is that of Gag-Pol polyprotein (pol) from Ovis aries (Sheep).